The chain runs to 134 residues: Small ribosomal subunit protein bS6 (134 aa).

Residues 97–134 form a disordered region; that stretch reads TDVSPIKASEGREDRRSAPQREERNHDNSDEVSEESED. The segment covering 105-125 has biased composition (basic and acidic residues); the sequence is SEGREDRRSAPQREERNHDNS.

The protein belongs to the bacterial ribosomal protein bS6 family.

Its function is as follows. Binds together with bS18 to 16S ribosomal RNA. The polypeptide is Small ribosomal subunit protein bS6 (Marinomonas sp. (strain MWYL1)).